The sequence spans 195 residues: Small ribosomal subunit protein eS1 (195 aa).

Belongs to the eukaryotic ribosomal protein eS1 family.

This chain is Small ribosomal subunit protein eS1, found in Methanothermobacter thermautotrophicus (strain ATCC 29096 / DSM 1053 / JCM 10044 / NBRC 100330 / Delta H) (Methanobacterium thermoautotrophicum).